A 345-amino-acid polypeptide reads, in one-letter code: Anthranilate phosphoribosyltransferase (345 aa).

Residues Gly-80, 83-84, Thr-88, 90-93, 108-116, and Ser-120 each bind 5-phospho-alpha-D-ribose 1-diphosphate; these read GD, NIST, and KHGNRSVSS. Gly-80 is a binding site for anthranilate. Ser-92 provides a ligand contact to Mg(2+). Asn-111 provides a ligand contact to anthranilate. Arg-166 is a binding site for anthranilate. Mg(2+) contacts are provided by Asp-225 and Glu-226.

The protein belongs to the anthranilate phosphoribosyltransferase family. Homodimer. It depends on Mg(2+) as a cofactor.

The catalysed reaction is N-(5-phospho-beta-D-ribosyl)anthranilate + diphosphate = 5-phospho-alpha-D-ribose 1-diphosphate + anthranilate. It participates in amino-acid biosynthesis; L-tryptophan biosynthesis; L-tryptophan from chorismate: step 2/5. Functionally, catalyzes the transfer of the phosphoribosyl group of 5-phosphorylribose-1-pyrophosphate (PRPP) to anthranilate to yield N-(5'-phosphoribosyl)-anthranilate (PRA). The sequence is that of Anthranilate phosphoribosyltransferase from Desulforamulus reducens (strain ATCC BAA-1160 / DSM 100696 / MI-1) (Desulfotomaculum reducens).